Consider the following 424-residue polypeptide: Dapdiamide A synthase (424 aa).

The 199-residue stretch at 120-318 (QEQLALKGVA…QISKLAQAVL (199 aa)) folds into the ATP-grasp domain. Residue 147-209 (AGHAHWPVVL…QEFLAGEEFV (63 aa)) participates in ATP binding. Residues Glu275 and Glu287 each coordinate Mg(2+).

Requires Mg(2+) as cofactor. Mn(2+) serves as cofactor.

It catalyses the reaction 3-[[[(2R,3R)-3-carboxyoxiran-2-yl]carbonyl]amino]-L-alanine + L-valine + ATP = dapdiamide E + ADP + phosphate + H(+). The enzyme catalyses N(3)-fumaramoyl-(S)-2,3-diaminopropanoate + L-valine + ATP = dapdiamide A + ADP + phosphate + H(+). The catalysed reaction is N(3)-fumaramoyl-(S)-2,3-diaminopropanoate + L-isoleucine + ATP = dapdiamide B + ADP + phosphate + H(+). It carries out the reaction N(3)-fumaramoyl-(S)-2,3-diaminopropanoate + L-leucine + ATP = dapdiamide C + ADP + phosphate + H(+). It functions in the pathway antibiotic biosynthesis. Involved in dapdiamide antibiotics biosynthesis. Ligates N-beta-fumaramoyl-DAP and valine, isoleucine or leucine to form dapdiamides A, B or C, respectively. Also ligates N-beta-epoxysuccinamoyl-DAP and valine to form dapdiamide E. The sequence is that of Dapdiamide A synthase from Enterobacter agglomerans (Erwinia herbicola).